Here is a 90-residue protein sequence, read N- to C-terminus: Elongation factor 1-beta (90 aa).

This sequence belongs to the EF-1-beta/EF-1-delta family.

Its function is as follows. Promotes the exchange of GDP for GTP in EF-1-alpha/GDP, thus allowing the regeneration of EF-1-alpha/GTP that could then be used to form the ternary complex EF-1-alpha/GTP/AAtRNA. This chain is Elongation factor 1-beta, found in Staphylothermus marinus (strain ATCC 43588 / DSM 3639 / JCM 9404 / F1).